Consider the following 408-residue polypeptide: Acetylornithine aminotransferase (408 aa).

Residues 107–108 (GT) and phenylalanine 141 contribute to the pyridoxal 5'-phosphate site. Arginine 144 contacts N(2)-acetyl-L-ornithine. Residue 227 to 230 (DEIQ) coordinates pyridoxal 5'-phosphate. Residue lysine 256 is modified to N6-(pyridoxal phosphate)lysine. Position 284 (threonine 284) interacts with N(2)-acetyl-L-ornithine. Threonine 285 lines the pyridoxal 5'-phosphate pocket.

It belongs to the class-III pyridoxal-phosphate-dependent aminotransferase family. ArgD subfamily. Homodimer. Pyridoxal 5'-phosphate serves as cofactor.

It is found in the cytoplasm. It catalyses the reaction N(2)-acetyl-L-ornithine + 2-oxoglutarate = N-acetyl-L-glutamate 5-semialdehyde + L-glutamate. Its pathway is amino-acid biosynthesis; L-arginine biosynthesis; N(2)-acetyl-L-ornithine from L-glutamate: step 4/4. This chain is Acetylornithine aminotransferase, found in Xanthomonas campestris pv. campestris (strain ATCC 33913 / DSM 3586 / NCPPB 528 / LMG 568 / P 25).